Here is a 202-residue protein sequence, read N- to C-terminus: S-modulin (202 aa).

A lipid anchor (N-myristoyl glycine) is attached at G2. 4 EF-hand domains span residues 25–60 (QEEL…FPDA), 61–96 (DPKA…TSSG), 97–132 (KANQ…IFKM), and 147–182 (TPEK…NKEI). 10 residues coordinate Ca(2+): D74, N76, D78, T80, E85, D110, D112, N114, T116, and E121.

This sequence belongs to the recoverin family. Post-translationally, the N-terminus is blocked.

Functionally, calcium-dependent regulator of light sensitivity of cGMP phosphodiesterase in rod outer segments. Controls rhodopsin phosphorylation in a Ca(2+)-dependent manner. The chain is S-modulin from Aquarana catesbeiana (American bullfrog).